The primary structure comprises 130 residues: HTH-type transcriptional regulator KmtR (130 aa).

An HTH arsR-type domain is found at 10–104; that stretch reads LPDDQVCLVV…DAVFNAEHAG (95 aa). A DNA-binding region (H-T-H motif) is located at residues 44-67; the sequence is VNELAEQVGKPAPSVSQHLAKLRM. Residues 110 to 130 are disordered; it reads HHRAAGGLQSVAKASATKDVG.

Its activity is regulated as follows. Binding to DNA is inhibited by nickel and cobalt ions. Functionally, represses expression of Rv2025c and its own expression. Acts by binding to the promoter regions. The protein is HTH-type transcriptional regulator KmtR (kmtR) of Mycobacterium tuberculosis (strain ATCC 25618 / H37Rv).